We begin with the raw amino-acid sequence, 122 residues long: MIQQESQLKVADNTGAKKVKCFKVLGGSRRRYATVGDVIVCSVRDVEPNSSIKKGDVIKAVIVRTRRHITRKDGSTLKFDTNSCVIIDDKGNPKGTRIFGPVAREIRDRGFIKISSLAPEVI.

It belongs to the universal ribosomal protein uL14 family. In terms of assembly, part of the 50S ribosomal subunit. Forms a cluster with proteins L3 and L19. In the 70S ribosome, L14 and L19 interact and together make contacts with the 16S rRNA in bridges B5 and B8.

Functionally, binds to 23S rRNA. Forms part of two intersubunit bridges in the 70S ribosome. This Chlamydia pneumoniae (Chlamydophila pneumoniae) protein is Large ribosomal subunit protein uL14.